The primary structure comprises 591 residues: Calnexin (591 aa).

Residues 1–20 (MEGKWLLCLLLVLGTAAVEA) form the signal peptide. Residues 21 to 482 (HDGHDDDAID…QMLEAAEERP (462 aa)) lie on the Lumenal side of the membrane. 2 residues coordinate Ca(2+): Ser75 and Asp118. N6-acetyllysine is present on Lys138. Cys161 and Cys195 are joined by a disulfide. An alpha-D-glucoside-binding residues include Tyr165, Lys167, Tyr186, and Asp193. The disordered stretch occupies residues 261 to 347 (GNLLNDMTPP…EKPEDWDEDM (87 aa)). Residues 275–320 (REIEDPEDRKPEDWDERPKIADPDAVKPDDWDEDAPSKIPDEEATK) are compositionally biased toward basic and acidic residues. The segment at 277–410 (IEDPEDRKPE…RKIPNPDFFE (134 aa)) is p domain (Extended arm). 5 consecutive repeat copies span residues 279 to 291 (DPED…WDER), 296 to 308 (DPDA…WDED), 315 to 327 (DEEA…WLDD), 334 to 346 (DPDA…WDED), and 349 to 359 (GEWEAPQIANP). 4 X approximate repeats regions lie at residues 279–346 (DPED…WDED) and 349–406 (GEWE…IPNP). Residues 324–347 (WLDDEPEYIPDPDAEKPEDWDEDM) are compositionally biased toward acidic residues. Residues 327-360 (DEPEYIPDPDAEKPEDWDEDMDGEWEAPQIANPK) form an interaction with PPIB region. Cys361 and Cys367 are oxidised to a cystine. 3 consecutive repeat copies span residues 368–378 (GVWQRPMIDNP), 382–392 (GKWKPPMIDNP), and 396–406 (GIWKPRKIPNP). Position 426 (Glu426) interacts with an alpha-D-glucoside. Asp437 is a binding site for Ca(2+). Residues 483 to 503 (WLWVVYILTVALPVFLVILFC) traverse the membrane as a helical segment. Residues Cys503 and Cys504 are each lipidated (S-palmitoyl cysteine). The Cytoplasmic segment spans residues 504-591 (CSGKKQSNAM…SPRNRKPRRE (88 aa)). The interval 504-591 (CSGKKQSNAM…SPRNRKPRRE (88 aa)) is sufficient to mediate interaction with SGIP1. Positions 514–539 (EYKKTDAPQPDVKDEEGKEEEKNKRD) are enriched in basic and acidic residues. The segment at 514–591 (EYKKTDAPQP…SPRNRKPRRE (78 aa)) is disordered. Residue Ser553 is modified to Phosphoserine. The span at 555–568 (AEEDGVTGSQDEED) shows a compositional bias: acidic residues. Thr561 carries the post-translational modification Phosphothreonine. A Phosphoserine; by MAPK3 modification is found at Ser563. Ser582 is modified (phosphoserine).

This sequence belongs to the calreticulin family. In terms of assembly, interacts with MAPK3/ERK1. Interacts with KCNH2. Associates with ribosomes. The palmitoylated form interacts with the ribosome-translocon complex component SSR1, promoting efficient folding of glycoproteins. Interacts with SERPINA2P/SERPINA2 and with the S and Z variants of SERPINA1. Interacts with SGIP1; involved in negative regulation of endocytosis. Interacts with PPIB. Interacts with SMIM22. Interacts with TMX2. Interacts with TMEM35A/NACHO. Interacts with CHRNA7. Interacts with reticulophagy regulators RETREG2 and RETREG3. Interacts with DNM1L; may form part of a larger protein complex at the ER-mitochondrial interface during mitochondrial fission. Interacts with ADAM7. Post-translationally, phosphorylated at Ser-563 by MAPK3/ERK1. Phosphorylation by MAPK3/ERK1 increases its association with ribosomes. In terms of processing, palmitoylation by DHHC6 leads to the preferential localization to the perinuclear rough ER. It mediates the association of calnexin with the ribosome-translocon complex (RTC) which is required for efficient folding of glycosylated proteins. Ubiquitinated, leading to proteasomal degradation. Probably ubiquitinated by ZNRF4. As to expression, expressed in sperm (at protein level).

Its subcellular location is the endoplasmic reticulum membrane. It is found in the mitochondrion membrane. The protein localises to the melanosome membrane. Calcium-binding protein that interacts with newly synthesized monoglucosylated glycoproteins in the endoplasmic reticulum. It may act in assisting protein assembly and/or in the retention within the ER of unassembled protein subunits. It seems to play a major role in the quality control apparatus of the ER by the retention of incorrectly folded proteins. Associated with partial T-cell antigen receptor complexes that escape the ER of immature thymocytes, it may function as a signaling complex regulating thymocyte maturation. Additionally it may play a role in receptor-mediated endocytosis at the synapse. The polypeptide is Calnexin (Canx) (Mus musculus (Mouse)).